The primary structure comprises 247 residues: UPF0309 protein GWCH70_1414 (247 aa).

The 184-residue stretch at valine 31–proline 214 folds into the SIS domain.

The protein belongs to the UPF0309 family.

The chain is UPF0309 protein GWCH70_1414 from Geobacillus sp. (strain WCH70).